Here is a 113-residue protein sequence, read N- to C-terminus: Ribulose bisphosphate carboxylase small subunit (113 aa).

The protein belongs to the RuBisCO small chain family. As to quaternary structure, heterohexadecamer of 8 large and 8 small subunits. Forms a CsoS2-CsoS1-RuBisCO complex.

The protein resides in the carboxysome. In terms of biological role, ruBisCO catalyzes two reactions: the carboxylation of D-ribulose 1,5-bisphosphate, the primary event in carbon dioxide fixation, as well as the oxidative fragmentation of the pentose substrate in the photorespiration process. Both reactions occur simultaneously and in competition at the same active site. Although the small subunit is not catalytic it is essential for maximal activity. There are estimated to be 152 RuBisCO holoenzymes per carboxysome. This chain is Ribulose bisphosphate carboxylase small subunit, found in Prochlorococcus marinus subsp. pastoris (strain CCMP1986 / NIES-2087 / MED4).